The following is a 495-amino-acid chain: COP9 signalosome complex subunit 2 (495 aa).

The tract at residues methionine 1 to valine 26 is disordered. Positions alanine 254–lysine 416 constitute a PCI domain. Positions proline 426–glutamine 468 are disordered. The segment covering aspartate 430–glycine 441 has biased composition (polar residues). Positions threonine 442–serine 455 are enriched in low complexity.

This sequence belongs to the CSN2 family. Component of the CSN complex, probably composed of csn-1, csn-2, csn-3, csn-4, csn-5, csn-6 and csn-7. Within the complex it probably interacts directly with csn-1, csn-3 and csn-4.

It is found in the cytoplasm. It localises to the nucleus. Its function is as follows. Essential component of the COP9 signalosome complex (CSN), a complex involved in various cellular and developmental processes. The CSN complex is an essential regulator of the ubiquitin (Ubl) conjugation pathway by mediating the deneddylation of the cullin subunits of the SCF-type E3 ligase complexes, leading to decrease the Ubl ligase activity of SCF. The CSN complex plays an essential role in embryogenesis and oogenesis and is required to regulate microtubule stability in the early embryo. Mediates mei-3/katanin targeting for degradation at the meiosis to mitosis transition via deneddylation of cul-3. This chain is COP9 signalosome complex subunit 2 (csn-2), found in Caenorhabditis elegans.